Reading from the N-terminus, the 486-residue chain is Kynurenine 3-monooxygenase (486 aa).

FAD contacts are provided by residues Val-19, 37-40 (YEAR), and Ala-57. L-kynurenine-binding residues include Arg-85 and Tyr-99. FAD contacts are provided by residues Arg-111, Leu-136, Thr-172, Asp-304, and 317-318 (MN). Positions 363 and 398 each coordinate L-kynurenine. Helical transmembrane passes span 385 to 404 (FLHAIMPSTFIPLYTMVTFS) and 425 to 445 (GLFFLGSLIAISSTYLLIHYM). Asn-465 carries N-linked (GlcNAc...) asparagine glycosylation.

This sequence belongs to the aromatic-ring hydroxylase family. KMO subfamily. Requires FAD as cofactor. As to expression, highest levels in placenta and liver. Detectable in kidney.

It is found in the mitochondrion outer membrane. It carries out the reaction L-kynurenine + NADPH + O2 + H(+) = 3-hydroxy-L-kynurenine + NADP(+) + H2O. The protein operates within cofactor biosynthesis; NAD(+) biosynthesis; quinolinate from L-kynurenine: step 1/3. In terms of biological role, catalyzes the hydroxylation of L-kynurenine (L-Kyn) to form 3-hydroxy-L-kynurenine (L-3OHKyn). Required for synthesis of quinolinic acid, a neurotoxic NMDA receptor antagonist and potential endogenous inhibitor of NMDA receptor signaling in axonal targeting, synaptogenesis and apoptosis during brain development. Quinolinic acid may also affect NMDA receptor signaling in pancreatic beta cells, osteoblasts, myocardial cells, and the gastrointestinal tract. In Homo sapiens (Human), this protein is Kynurenine 3-monooxygenase.